A 438-amino-acid polypeptide reads, in one-letter code: GTPase Obg (438 aa).

In terms of domain architecture, Obg spans 2-160 (SMFLDTAKIS…RELELELKIL (159 aa)). The tract at residues 128-147 (NIRFATPRNPAPEIAENGEP) is disordered. Positions 161–338 (ADVGLVGFPS…LLDATANLLA (178 aa)) constitute an OBG-type G domain. GTP is bound by residues 167–174 (GFPSVGKS), 192–196 (FTTIV), 214–217 (DLPG), 284–287 (NKMD), and 319–321 (STL). Mg(2+)-binding residues include S174 and T194. One can recognise an OCT domain in the interval 360–438 (GFSEEEKAFE…IGNFEFEFVD (79 aa)).

The protein belongs to the TRAFAC class OBG-HflX-like GTPase superfamily. OBG GTPase family. In terms of assembly, monomer. Mg(2+) serves as cofactor.

The protein resides in the cytoplasm. Its function is as follows. An essential GTPase which binds GTP, GDP and possibly (p)ppGpp with moderate affinity, with high nucleotide exchange rates and a fairly low GTP hydrolysis rate. Plays a role in control of the cell cycle, stress response, ribosome biogenesis and in those bacteria that undergo differentiation, in morphogenesis control. The protein is GTPase Obg of Streptococcus uberis (strain ATCC BAA-854 / 0140J).